A 489-amino-acid polypeptide reads, in one-letter code: Tandem C2 domains nuclear protein (489 aa).

Residues S82, S155, S167, S173, and S210 each carry the phosphoserine modification. Positions 189-214 (DSFSSVPSSSSSRKNSQGSNRSLDTI) are disordered. Residues 191–210 (FSSVPSSSSSRKNSQGSNRS) are compositionally biased toward low complexity. Phosphothreonine is present on residues T213 and T215. S217 bears the Phosphoserine mark. C2 domains follow at residues 222-341 (DLGR…SLEI) and 343-470 (APSK…NQWK). The Nuclear localization signal signature appears at 446 to 448 (RRK).

Its subcellular location is the nucleus. This chain is Tandem C2 domains nuclear protein (Tc2n), found in Mus musculus (Mouse).